The chain runs to 301 residues: Probable alpha-L-glutamate ligase 1 (301 aa).

Residues 104-287 (LQLLSRKGIG…VTEPIVEYIE (184 aa)) enclose the ATP-grasp domain. Residues Lys-141, 178 to 179 (EY), Asp-187, and 211 to 213 (RSN) contribute to the ATP site. Residues Asp-248, Glu-260, and Asn-262 each coordinate Mg(2+). Mn(2+) contacts are provided by Asp-248, Glu-260, and Asn-262.

The protein belongs to the RimK family. Mg(2+) is required as a cofactor. It depends on Mn(2+) as a cofactor.

This chain is Probable alpha-L-glutamate ligase 1, found in Shewanella oneidensis (strain ATCC 700550 / JCM 31522 / CIP 106686 / LMG 19005 / NCIMB 14063 / MR-1).